The primary structure comprises 360 residues: Photosystem II protein D1 3 (360 aa).

A run of 3 helical transmembrane segments spans residues 29-46 (YVGW…TAAI), 118-133 (HFLI…QWEL), and 142-156 (WIPV…AATA). H118 contributes to the chlorophyll a binding site. Y126 lines the pheophytin a pocket. [CaMn4O5] cluster is bound by residues D170 and E189. A helical membrane pass occupies residues 197-218 (FHMIGVAGVFGGALFSAMHGSL). Residue H198 coordinates chlorophyll a. A quinone contacts are provided by residues H215 and 264–265 (SF). H215 is a Fe cation binding site. H272 lines the Fe cation pocket. The chain crosses the membrane as a helical span at residues 274–288 (FLAAWPVIGIWFAAL). Residues H332, E333, D342, and A344 each contribute to the [CaMn4O5] cluster site. Residues 345–360 (SGEVQPIALTAPAIAS) constitute a propeptide that is removed on maturation.

The protein belongs to the reaction center PufL/M/PsbA/D family. PSII is composed of 1 copy each of membrane proteins PsbA, PsbB, PsbC, PsbD, PsbE, PsbF, PsbH, PsbI, PsbJ, PsbK, PsbL, PsbM, PsbT, PsbX, PsbY, PsbZ, Psb30/Ycf12, peripheral proteins PsbO, CyanoQ (PsbQ), PsbU, PsbV and a large number of cofactors. It forms dimeric complexes. The D1/D2 heterodimer binds P680, chlorophylls that are the primary electron donor of PSII, and subsequent electron acceptors. It shares a non-heme iron and each subunit binds pheophytin, quinone, additional chlorophylls, carotenoids and lipids. D1 provides most of the ligands for the Mn4-Ca-O5 cluster of the oxygen-evolving complex (OEC). There is also a Cl(-1) ion associated with D1 and D2, which is required for oxygen evolution. The PSII complex binds additional chlorophylls, carotenoids and specific lipids. serves as cofactor. Post-translationally, tyr-161 forms a radical intermediate that is referred to as redox-active TyrZ, YZ or Y-Z. In terms of processing, C-terminally processed by CtpA; processing is essential to allow assembly of the oxygen-evolving complex and thus photosynthetic growth.

It is found in the cellular thylakoid membrane. The enzyme catalyses 2 a plastoquinone + 4 hnu + 2 H2O = 2 a plastoquinol + O2. In terms of biological role, photosystem II (PSII) is a light-driven water:plastoquinone oxidoreductase that uses light energy to abstract electrons from H(2)O, generating O(2) and a proton gradient subsequently used for ATP formation. It consists of a core antenna complex that captures photons, and an electron transfer chain that converts photonic excitation into a charge separation. The D1/D2 (PsbA/PsbD) reaction center heterodimer binds P680, the primary electron donor of PSII as well as several subsequent electron acceptors. This Nostoc sp. (strain PCC 7120 / SAG 25.82 / UTEX 2576) protein is Photosystem II protein D1 3.